The following is a 593-amino-acid chain: ABC1 family protein lscO (593 aa).

Disordered regions lie at residues 1–29 (MDVA…GGKK) and 441–467 (PYKN…EERK). 2 stretches are compositionally biased toward basic and acidic residues: residues 8–22 (MERH…DDGT) and 457–467 (QRTKETPEERK).

The protein belongs to the protein kinase superfamily. ADCK protein kinase family.

In terms of biological role, ABC1 family protein; part of the gene cluster that mediates the biosynthesis of the lipopeptide antibiotics leucinostatins that show extensive biological activities, including antimalarial, antiviral, antibacterial, antifungal, and antitumor activities, as well as phytotoxic. The function of lcsO within the leucinostatins biosynthesis has not been identified yet. This Purpureocillium lilacinum (Paecilomyces lilacinus) protein is ABC1 family protein lscO.